An 88-amino-acid polypeptide reads, in one-letter code: DNA-directed RNA polymerase subunit omega (88 aa).

Belongs to the RNA polymerase subunit omega family. The RNAP catalytic core consists of 2 alpha, 1 beta, 1 beta' and 1 omega subunit. When a sigma factor is associated with the core the holoenzyme is formed, which can initiate transcription.

It catalyses the reaction RNA(n) + a ribonucleoside 5'-triphosphate = RNA(n+1) + diphosphate. Functionally, promotes RNA polymerase assembly. Latches the N- and C-terminal regions of the beta' subunit thereby facilitating its interaction with the beta and alpha subunits. The protein is DNA-directed RNA polymerase subunit omega of Yersinia pestis (strain Pestoides F).